A 439-amino-acid chain; its full sequence is Maintenance of mitochondrial morphology protein 1 (439 aa).

Residues Met-1–Gly-76 lie on the Lumenal side of the membrane. The chain crosses the membrane as a helical span at residues Leu-77–Phe-97. Over Ala-98–Ile-439 the chain is Cytoplasmic. Disordered regions lie at residues Lys-125–Ser-145, Met-309–Thr-336, and Arg-405–Ala-425. Residues Ala-165–Pro-395 form the SMP-LTD domain. 2 stretches are compositionally biased toward low complexity: residues Glu-315–Asn-326 and Lys-410–Ser-424.

This sequence belongs to the MMM1 family. Homodimer. Component of the ER-mitochondria encounter structure (ERMES) or MDM complex, composed of MMM1, MDM10, MDM12 and MDM34. An MMM1 homodimer associates with one molecule of MDM12 on each side in a pairwise head-to-tail manner, and the SMP-LTD domains of MMM1 and MDM12 generate a continuous hydrophobic tunnel for phospholipid trafficking.

Its subcellular location is the endoplasmic reticulum membrane. Its function is as follows. Component of the ERMES/MDM complex, which serves as a molecular tether to connect the endoplasmic reticulum (ER) and mitochondria. Components of this complex are involved in the control of mitochondrial shape and protein biogenesis, and function in nonvesicular lipid trafficking between the ER and mitochondria. The MDM12-MMM1 subcomplex functions in the major beta-barrel assembly pathway that is responsible for biogenesis of all outer membrane beta-barrel proteins, and acts in a late step after the SAM complex. The MDM10-MDM12-MMM1 subcomplex further acts in the TOM40-specific pathway after the action of the MDM12-MMM1 complex. Essential for establishing and maintaining the structure of mitochondria and maintenance of mtDNA nucleoids. This Candida albicans (strain SC5314 / ATCC MYA-2876) (Yeast) protein is Maintenance of mitochondrial morphology protein 1.